The sequence spans 765 residues: DNA topoisomerase 1 (765 aa).

Residues 1 to 23 show a composition bias toward basic and acidic residues; that stretch reads MSGDHLHNDSQIEADFRLNDSHK. A disordered region spans residues 1–199; it reads MSGDHLHNDS…NKKKKPKKEE (199 aa). Position 2 is an N-acetylserine (S2). 2 positions are modified to phosphoserine: S2 and S10. Residues 24 to 39 are compositionally biased toward basic residues; that stretch reads HKDKHKDREHRHKEHK. The span at 40–108 shows a compositional bias: basic and acidic residues; it reads KEKDREKSKH…DAKIKKEKEN (69 aa). Phosphoserine is present on S57. Residue K101 forms a Glycyl lysine isopeptide (Lys-Gly) (interchain with G-Cter in SUMO2) linkage. K103 is covalently cross-linked (Glycyl lysine isopeptide (Lys-Gly) (interchain with G-Cter in SUMO); alternate). A Glycyl lysine isopeptide (Lys-Gly) (interchain with G-Cter in SUMO2); alternate cross-link involves residue K103. Phosphoserine is present on S112. A Glycyl lysine isopeptide (Lys-Gly) (interchain with G-Cter in SUMO); alternate cross-link involves residue K117. K117 participates in a covalent cross-link: Glycyl lysine isopeptide (Lys-Gly) (interchain with G-Cter in SUMO2); alternate. Residue K117 forms a Glycyl lysine isopeptide (Lys-Gly) (interchain with G-Cter in SUMO1); alternate linkage. Basic and acidic residues predominate over residues 129-166; sequence PKEDIKPLKRPRDEDDADYKPKKIKTEDTKKEKKRKLE. Residues K134 and K148 each participate in a glycyl lysine isopeptide (Lys-Gly) (interchain with G-Cter in SUMO2) cross-link. A Glycyl lysine isopeptide (Lys-Gly) (interchain with G-Cter in SUMO); alternate cross-link involves residue K153. A Glycyl lysine isopeptide (Lys-Gly) (interchain with G-Cter in SUMO2); alternate cross-link involves residue K153. Glycyl lysine isopeptide (Lys-Gly) (interchain with G-Cter in SUMO2) cross-links involve residues K158 and K164. A Glycyl lysine isopeptide (Lys-Gly) (interchain with G-Cter in SUMO2); alternate cross-link involves residue K172. The residue at position 172 (K172) is an N6-acetyllysine; alternate. A compositionally biased stretch (basic and acidic residues) spans 179 to 199; the sequence is KDKDKKVPEPDNKKKKPKKEE. Residue K204 forms a Glycyl lysine isopeptide (Lys-Gly) (interchain with G-Cter in SUMO2) linkage. K280 is subject to N6-acetyllysine. Residue K336 forms a Glycyl lysine isopeptide (Lys-Gly) (interchain with G-Cter in SUMO2) linkage. Interaction with DNA regions lie at residues 425–426 and 488–493; these read KY and RAGNEK. The Topo IB-type catalytic domain maps to 432–765; it reads SSRIKGEKDW…IDMADEDYEF (334 aa). S506 carries the phosphoserine; by CK2 modification. K549 participates in a covalent cross-link: Glycyl lysine isopeptide (Lys-Gly) (interchain with G-Cter in SUMO2). The interaction with DNA stretch occupies residues 585-587; the sequence is TAK. Residues K642, K700, and K712 each participate in a glycyl lysine isopeptide (Lys-Gly) (interchain with G-Cter in SUMO2) cross-link. Y723 functions as the O-(3'-phospho-DNA)-tyrosine intermediate in the catalytic mechanism.

It belongs to the type IB topoisomerase family. As to quaternary structure, monomer. Interacts with ERCC6. Interacts with TPRN; TPRN interacts with a number of DNA damage response proteins, is recruited to sites of DNA damage and may play a role in DNA damage repair. In terms of assembly, (Microbial infection) Interacts with SV40 Large T antigen; this interactions allows viral DNA replication. Post-translationally, sumoylated. Lys-117 is the main site of sumoylation. Sumoylation plays a role in partitioning TOP1 between nucleoli and nucleoplasm. Levels are dramatically increased on camptothecin (CPT) treatment. Phosphorylation at Ser-506 by CK2 increases binding to supercoiled DNA and sensitivity to camptothecin. Endothelial cells.

The protein localises to the nucleus. It localises to the nucleolus. Its subcellular location is the nucleoplasm. It catalyses the reaction ATP-independent breakage of single-stranded DNA, followed by passage and rejoining.. With respect to regulation, specifically inhibited by camptothecin (CPT), a plant alkaloid with antitumor activity. Releases the supercoiling and torsional tension of DNA introduced during the DNA replication and transcription by transiently cleaving and rejoining one strand of the DNA duplex. Introduces a single-strand break via transesterification at a target site in duplex DNA. The scissile phosphodiester is attacked by the catalytic tyrosine of the enzyme, resulting in the formation of a DNA-(3'-phosphotyrosyl)-enzyme intermediate and the expulsion of a 5'-OH DNA strand. The free DNA strand then rotates around the intact phosphodiester bond on the opposing strand, thus removing DNA supercoils. Finally, in the religation step, the DNA 5'-OH attacks the covalent intermediate to expel the active-site tyrosine and restore the DNA phosphodiester backbone. Regulates the alternative splicing of tissue factor (F3) pre-mRNA in endothelial cells. Involved in the circadian transcription of the core circadian clock component BMAL1 by altering the chromatin structure around the ROR response elements (ROREs) on the BMAL1 promoter. This is DNA topoisomerase 1 (TOP1) from Homo sapiens (Human).